The chain runs to 347 residues: Nuclear distribution protein nudE-like 1 (347 aa).

A coiled-coil region spans residues 28 to 190; that stretch reads QSFQEARDEL…LAVRERQQEV (163 aa). Residues 56–166 form a self-association region; sequence VQAEQRNRDL…LDEKESLLVS (111 aa). Residues 64–189 are interaction with KATNB1; the sequence is DLQADNQRLK…ELAVRERQQE (126 aa). Positions 114-133 are required for interaction with PAFAH1B1; the sequence is YVRELEQANDDLERAKRATI. An interaction with CENPF region spans residues 175-347; the sequence is RDLRQELAVR…SAPGMLPLSV (173 aa). The interval 189–256 is interaction with YWHAE; the sequence is EVTRKSAPSS…SARISALNIV (68 aa). Residues 191–347 are interaction with NEFL; sequence TRKSAPSSPT…SAPGMLPLSV (157 aa). Positions 195–256 are interaction with KATNA1; sequence APSSPTLDCE…SARISALNIV (62 aa). S215 bears the Phosphoserine mark. A Phosphothreonine; by CDK1 and MAPK1 modification is found at T219. At S231 the chain carries Phosphoserine. Residues 241 to 280 are interaction with DISC1; sequence TSPLTPSARISALNIVGDLLRKVGALESKLAACRNFAKDQ. Phosphoserine; by CDK1 is present on S242. Position 245 is a phosphothreonine; by CDK1 and MAPK1 (T245). The required for localization to the centrosome and interaction with dynein, dynactin, tubulin gamma, PCM1 and PCNT stretch occupies residues 256–291; the sequence is VGDLLRKVGALESKLAACRNFAKDQASRKSYISGNV. A lipid anchor (S-palmitoyl cysteine; by ZDHHC2, ZDHHC3 and ZDHHC7) is attached at C273. Positions 314–347 are disordered; sequence KGAVNGFDPAPPPPDPGLGSSRPSSAPGMLPLSV. S346 carries the post-translational modification Phosphoserine.

It belongs to the nudE family. As to quaternary structure, self-associates. Interacts with DISC1, dynein, dynactin, tubulin gamma, KATNA1, KATNB1, microtubules, PAFAH1B1, PCM1, PCNT, and YWHAE. Interacts directly with NEFL and indirectly with NEFH. Interacts (via C-terminus) with CENPF. Interacts with ZNF365. Interacts with PLEKHM1 (via N- and C-terminus). Interacts with GTP-bound RAB9A; the interaction may lead to RAB9A-dynein motor tethering. Post-translationally, phosphorylated in mitosis. Can be phosphorylated by CDK1, CDK5 and MAPK1. Phosphorylation by CDK5 promotes interaction with KATNA1 and YWHAE. In terms of processing, palmitoylation at Cys-273 reduces affinity for dynein.

The protein localises to the cytoplasm. It localises to the cytoskeleton. Its subcellular location is the microtubule organizing center. The protein resides in the centrosome. It is found in the chromosome. The protein localises to the centromere. It localises to the kinetochore. Its subcellular location is the spindle. Functionally, required for organization of the cellular microtubule array and microtubule anchoring at the centrosome. May regulate microtubule organization at least in part by targeting the microtubule severing protein KATNA1 to the centrosome. Also positively regulates the activity of the minus-end directed microtubule motor protein dynein. May enhance dynein-mediated microtubule sliding by targeting dynein to the microtubule plus ends. Required for several dynein- and microtubule-dependent processes such as the maintenance of Golgi integrity, the centripetal motion of secretory vesicles and the coupling of the nucleus and centrosome. Also required during brain development for the migration of newly formed neurons from the ventricular/subventricular zone toward the cortical plate. Required for mitosis in some cell types but appears to be dispensible for mitosis in cortical neuronal progenitors, which instead requires NDE1. Facilitates the polymerization of neurofilaments from the individual subunits NEFH and NEFL. Positively regulates lysosome peripheral distribution and ruffled border formation in osteoclasts. Plays a role, together with DISC1, in the regulation of neurite outgrowth. May act as a RAB9A/B effector that tethers RAB9-associated late endosomes to the dynein motor for their retrograde transport to the trans-Golgi network. The protein is Nuclear distribution protein nudE-like 1 (NDEL1) of Macaca fascicularis (Crab-eating macaque).